The primary structure comprises 275 residues: Testis-specific gene 13 protein (275 aa).

Residues 1 to 20 show a composition bias toward polar residues; that stretch reads MSQKRQTKFQNGKSKTSENS. A disordered region spans residues 1-28; the sequence is MSQKRQTKFQNGKSKTSENSSAKREKGM.

As to expression, testis-specific.

This Homo sapiens (Human) protein is Testis-specific gene 13 protein (TSGA13).